The chain runs to 142 residues: MSVVSVSMPEELLERLDDFADDHGYTGRSEVVREASRNLLGEFEDKKLEGRELMGVVTVVFDYETTTVEEKMMHLRHEHEGLVASNFHSHVGGHHCMELFVLEGSLESISTFVGKIRATKDTLTIDYSVLPVDEFGGLADVS.

Residues His-77, His-88, His-90, and Cys-96 each contribute to the Ni(2+) site.

The protein belongs to the transcriptional regulatory CopG/NikR family. In terms of assembly, homotetramer. Requires Ni(2+) as cofactor.

Functionally, transcriptional regulator. In Halobacterium salinarum (strain ATCC 700922 / JCM 11081 / NRC-1) (Halobacterium halobium), this protein is Putative nickel-responsive regulator.